Here is a 467-residue protein sequence, read N- to C-terminus: 3-isopropylmalate dehydratase large subunit (467 aa).

[4Fe-4S] cluster contacts are provided by C348, C409, and C412.

Belongs to the aconitase/IPM isomerase family. LeuC type 1 subfamily. In terms of assembly, heterodimer of LeuC and LeuD. [4Fe-4S] cluster is required as a cofactor.

It carries out the reaction (2R,3S)-3-isopropylmalate = (2S)-2-isopropylmalate. Its pathway is amino-acid biosynthesis; L-leucine biosynthesis; L-leucine from 3-methyl-2-oxobutanoate: step 2/4. Functionally, catalyzes the isomerization between 2-isopropylmalate and 3-isopropylmalate, via the formation of 2-isopropylmaleate. In Magnetococcus marinus (strain ATCC BAA-1437 / JCM 17883 / MC-1), this protein is 3-isopropylmalate dehydratase large subunit.